A 671-amino-acid chain; its full sequence is Probable potassium transport system protein Kup (671 aa).

Positions 1–43 are disordered; it reads MSQIPSPNDPASTGAAPSSAAVPAGPSATPAPSPTAGFSLPGH. Residues 10-37 are compositionally biased toward low complexity; that stretch reads PASTGAAPSSAAVPAGPSATPAPSPTAG. 12 consecutive transmembrane segments (helical) span residues 52 to 72, 92 to 112, 147 to 167, 181 to 201, 209 to 229, 255 to 275, 291 to 311, 323 to 343, 381 to 401, 407 to 427, 441 to 461, and 465 to 485; these read LAAL…TSPL, VLGV…FKYM, LMLG…TPAI, PAME…LFLF, VGAV…VLGV, GWHG…GEAL, WLGL…ALLL, LLAP…AAIV, IYLP…VLGF, LASA…LLFH, AWPL…ANVV, and DGGW…STWK.

It belongs to the HAK/KUP transporter (TC 2.A.72) family.

The protein resides in the cell inner membrane. It carries out the reaction K(+)(in) + H(+)(in) = K(+)(out) + H(+)(out). Its function is as follows. Transport of potassium into the cell. Likely operates as a K(+):H(+) symporter. This Anaeromyxobacter sp. (strain K) protein is Probable potassium transport system protein Kup.